Reading from the N-terminus, the 138-residue chain is Small ribosomal subunit protein uS11c (138 aa).

Positions 1–23 are disordered; that stretch reads MAKPIPRIGSRRNGRISSRKSTR. Residues 9-23 are compositionally biased toward basic residues; that stretch reads GSRRNGRISSRKSTR.

The protein belongs to the universal ribosomal protein uS11 family. Part of the 30S ribosomal subunit.

It is found in the plastid. The protein resides in the chloroplast. The sequence is that of Small ribosomal subunit protein uS11c from Cucumis sativus (Cucumber).